Reading from the N-terminus, the 232-residue chain is Large ribosomal subunit protein uL1 (232 aa).

It belongs to the universal ribosomal protein uL1 family. As to quaternary structure, part of the 50S ribosomal subunit.

Functionally, binds directly to 23S rRNA. The L1 stalk is quite mobile in the ribosome, and is involved in E site tRNA release. Its function is as follows. Protein L1 is also a translational repressor protein, it controls the translation of the L11 operon by binding to its mRNA. The polypeptide is Large ribosomal subunit protein uL1 (Alkaliphilus metalliredigens (strain QYMF)).